The following is a 300-amino-acid chain: 4-hydroxy-tetrahydrodipicolinate synthase (300 aa).

Threonine 56 provides a ligand contact to pyruvate. Tyrosine 145 acts as the Proton donor/acceptor in catalysis. Residue lysine 173 is the Schiff-base intermediate with substrate of the active site. Valine 215 contacts pyruvate.

Belongs to the DapA family. As to quaternary structure, homotetramer; dimer of dimers.

It localises to the cytoplasm. It catalyses the reaction L-aspartate 4-semialdehyde + pyruvate = (2S,4S)-4-hydroxy-2,3,4,5-tetrahydrodipicolinate + H2O + H(+). It functions in the pathway amino-acid biosynthesis; L-lysine biosynthesis via DAP pathway; (S)-tetrahydrodipicolinate from L-aspartate: step 3/4. In terms of biological role, catalyzes the condensation of (S)-aspartate-beta-semialdehyde [(S)-ASA] and pyruvate to 4-hydroxy-tetrahydrodipicolinate (HTPA). This chain is 4-hydroxy-tetrahydrodipicolinate synthase, found in Prochlorococcus marinus (strain AS9601).